The primary structure comprises 395 residues: uncharacterized protein (395 aa).

Positions 286–306 (SSNKSSESTMTSPLDSASSLH) are enriched in low complexity. Residues 286–395 (SSNKSSESTM…RNDDSGLESV (110 aa)) form a disordered region. Positions 350-362 (RPPPPSVHPPIFP) are enriched in pro residues. A compositionally biased stretch (polar residues) spans 364–385 (QTQLFHPPTYSTQRHVTSPNSS).

This is an uncharacterized protein from Caenorhabditis elegans.